We begin with the raw amino-acid sequence, 622 residues long: Palmitoyl-protein thioesterase-dolichyl pyrophosphate phosphatase fusion 1 (622 aa).

The first 24 residues, 1-24 (MLSCSSFLIFFLFSWVLLPMKSFA), serve as a signal peptide directing secretion. At 25–405 (IPIISLDKVR…NVSEEKGPKS (381 aa)) the chain is on the lumenal side. The cysteines at positions 106 and 138 are disulfide-linked. Ser125 is an active-site residue. Asn223 is a glycosylation site (N-linked (GlcNAc...) asparagine). The active site involves Asp245. The N-linked (GlcNAc...) asparagine glycan is linked to Asn260. The active site involves His298. Residue Asn396 is glycosylated (N-linked (GlcNAc...) asparagine). A helical membrane pass occupies residues 406-426 (FANLAFITIFSHFFYHIDDMW). The Cytoplasmic segment spans residues 427 to 428 (RS). A helical transmembrane segment spans residues 429-449 (TLGLFSLIPQIIGIIYLTVMF). Residues 450 to 488 (TGRELDTFMQFGGQVVNEFINYVVKVSLKYPRPADIEYG) are Lumenal-facing. The chain crosses the membrane as a helical span at residues 489–511 (VGYGMPSSHSQFMGFFSAYMIAW). At 512–519 (DYKYRRSQ) the chain is on the cytoplasmic side. The chain crosses the membrane as a helical span at residues 520–540 (CFSMLSFAKYAIYLTLSTFVC). The Lumenal portion of the chain corresponds to 541–552 (SSRYLLDFHYLT). The helical transmembrane segment at 553 to 573 (QVVYGYMIGFGVGLFWVYLVG) threads the bilayer. Over 574-622 (KLRSLGVTKWLLSLPPLQFFYIKDTIPHSKDNHKRQWLESKQFKNQKSN) the chain is Cytoplasmic.

This sequence in the N-terminal section; belongs to the palmitoyl-protein thioesterase family. It in the C-terminal section; belongs to the dolichyldiphosphatase family. Proteolytically cleaved, possibly by krp1.

It is found in the vacuole. Its subcellular location is the endoplasmic reticulum membrane. The catalysed reaction is S-hexadecanoyl-L-cysteinyl-[protein] + H2O = L-cysteinyl-[protein] + hexadecanoate + H(+). It catalyses the reaction a di-trans,poly-cis-dolichyl diphosphate + H2O = a di-trans,poly-cis-dolichyl phosphate + phosphate + H(+). Functionally, essential protein. Removes thioester-linked fatty acyl groups such as palmitate from modified cysteine residues in proteins or peptides during vacuolar degradation. Required for efficient N-glycosylation. Necessary for maintaining optimal levels of dolichol-linked oligosaccharides. The polypeptide is Palmitoyl-protein thioesterase-dolichyl pyrophosphate phosphatase fusion 1 (pdf1) (Schizosaccharomyces pombe (strain 972 / ATCC 24843) (Fission yeast)).